Reading from the N-terminus, the 335-residue chain is Glyceraldehyde-3-phosphate dehydrogenase 2 (335 aa).

Residues 13-14 (TI) and glycine 111 contribute to the NAD(+) site. Residue 140–142 (SCN) participates in D-glyceraldehyde 3-phosphate binding. Residue cysteine 141 is the Nucleophile of the active site. An NAD(+)-binding site is contributed by arginine 169. Residues threonine 171 and 195–196 (HG) contribute to the D-glyceraldehyde 3-phosphate site. An NAD(+)-binding site is contributed by glutamine 300.

It belongs to the glyceraldehyde-3-phosphate dehydrogenase family. In terms of assembly, homotetramer.

It is found in the cytoplasm. It catalyses the reaction D-glyceraldehyde 3-phosphate + phosphate + NADP(+) = (2R)-3-phospho-glyceroyl phosphate + NADPH + H(+). The enzyme catalyses D-glyceraldehyde 3-phosphate + phosphate + NAD(+) = (2R)-3-phospho-glyceroyl phosphate + NADH + H(+). The protein operates within carbohydrate degradation; glycolysis; pyruvate from D-glyceraldehyde 3-phosphate: step 1/5. This Methanosarcina acetivorans (strain ATCC 35395 / DSM 2834 / JCM 12185 / C2A) protein is Glyceraldehyde-3-phosphate dehydrogenase 2 (gapB).